The chain runs to 194 residues: MYLINQNGWIEVICGSMFSGKSEELIRRVRRTQFAKQHAIVFKPCIDNRYSEEDVVSHNGLKVKAVPVSASKDIFEHITEEMDVIAIDEVQFFDGDIVEVVQVLANRGYRVIVAGLDQDFRGLPFGQVPQLMAIAEHVTKLQAVCSACGSPASRTQRLIDGEPAAFDDPIILVGASESYEPRCRHCHAVPTKQR.

ATP-binding positions include 15 to 22 (GSMFSGKS) and 88 to 91 (DEVQ). Catalysis depends on glutamate 89, which acts as the Proton acceptor. 4 residues coordinate Zn(2+): cysteine 145, cysteine 148, cysteine 183, and cysteine 186.

This sequence belongs to the thymidine kinase family. In terms of assembly, homotetramer.

The protein resides in the cytoplasm. The enzyme catalyses thymidine + ATP = dTMP + ADP + H(+). The sequence is that of Thymidine kinase from Bacillus cereus (strain AH820).